Reading from the N-terminus, the 566-residue chain is SRSF protein kinase 3 (566 aa).

Residues 1–13 (MSASTGGGGGGDS) show a composition bias toward gly residues. A disordered region spans residues 1–60 (MSASTGGGGGGDSGSSSSSSSQASCGPEPSGSELAPPTPAPRMLQGLLGSDDEEQEDPKD). A compositionally biased stretch (low complexity) spans 14-26 (GSSSSSSSQASCG). Phosphoserine is present on S50. A Protein kinase domain is found at 79–564 (YHVVRKLGWG…AADCLQHPWL (486 aa)). Residues 85–93 (LGWGHFSTV) and K108 each bind ATP. The active-site Proton acceptor is the D212. The segment covering 236-254 (EWQQSGAPPPSRSTVSTAP) has biased composition (polar residues). 2 disordered regions span residues 236–283 (EWQQ…LLEE) and 295–353 (EAAA…SGFS). Residues 263–278 (SKNKRKKMRRKRKQQK) are compositionally biased toward basic residues. Residue S329 is modified to Phosphoserine. A compositionally biased stretch (low complexity) spans 330 to 339 (PASSSPAPGG). The segment covering 344–353 (SPGSQTSGFS) has biased composition (polar residues).

It belongs to the protein kinase superfamily. As to expression, highly expressed in skeletal muscle, heart, uterus and parorchis. Weakly expressed in brain, stomach, small intestine and ovary.

It is found in the nucleus. The protein resides in the cytoplasm. It catalyses the reaction L-seryl-[protein] + ATP = O-phospho-L-seryl-[protein] + ADP + H(+). The enzyme catalyses L-threonyl-[protein] + ATP = O-phospho-L-threonyl-[protein] + ADP + H(+). In terms of biological role, serine/arginine-rich protein-specific kinase which specifically phosphorylates its substrates at serine residues located in regions rich in arginine/serine dipeptides, known as RS domains. Phosphorylates the SR splicing factor SRSF1 and the lamin-B receptor (LBR) in vitro. Required for normal muscle development. The polypeptide is SRSF protein kinase 3 (SRPK3) (Sus scrofa (Pig)).